Consider the following 162-residue polypeptide: ATP synthase subunit b (162 aa).

The helical transmembrane segment at Leu-2–Leu-22 threads the bilayer.

It belongs to the ATPase B chain family. F-type ATPases have 2 components, F(1) - the catalytic core - and F(0) - the membrane proton channel. F(1) has five subunits: alpha(3), beta(3), gamma(1), delta(1), epsilon(1). F(0) has three main subunits: a(1), b(2) and c(10-14). The alpha and beta chains form an alternating ring which encloses part of the gamma chain. F(1) is attached to F(0) by a central stalk formed by the gamma and epsilon chains, while a peripheral stalk is formed by the delta and b chains.

It localises to the cell membrane. In terms of biological role, f(1)F(0) ATP synthase produces ATP from ADP in the presence of a proton or sodium gradient. F-type ATPases consist of two structural domains, F(1) containing the extramembraneous catalytic core and F(0) containing the membrane proton channel, linked together by a central stalk and a peripheral stalk. During catalysis, ATP synthesis in the catalytic domain of F(1) is coupled via a rotary mechanism of the central stalk subunits to proton translocation. Functionally, component of the F(0) channel, it forms part of the peripheral stalk, linking F(1) to F(0). This Pelotomaculum thermopropionicum (strain DSM 13744 / JCM 10971 / SI) protein is ATP synthase subunit b.